Reading from the N-terminus, the 497-residue chain is Cytochrome P450 monooxygenase 151 (497 aa).

A helical membrane pass occupies residues methionine 1–tyrosine 21. N-linked (GlcNAc...) asparagine glycosylation is found at asparagine 292 and asparagine 397. Heme is bound at residue cysteine 441.

Belongs to the cytochrome P450 family. Requires heme as cofactor.

It localises to the membrane. The protein operates within secondary metabolite biosynthesis. Functionally, cytochrome P450 monooxygenase that is able to use dehydroabietic acid and testosterone as substrates for oxidation, suggesting that the natural substrate(s) may be structurally related to steroid compounds. This is Cytochrome P450 monooxygenase 151 from Postia placenta (strain ATCC 44394 / Madison 698-R) (Brown rot fungus).